The primary structure comprises 65 residues: Large ribosomal subunit protein bL35 (65 aa).

Belongs to the bacterial ribosomal protein bL35 family.

This chain is Large ribosomal subunit protein bL35, found in Clostridium acetobutylicum (strain ATCC 824 / DSM 792 / JCM 1419 / IAM 19013 / LMG 5710 / NBRC 13948 / NRRL B-527 / VKM B-1787 / 2291 / W).